Reading from the N-terminus, the 349-residue chain is Protein BCCIP homolog (349 aa).

A compositionally biased stretch (basic residues) spans 1-10; it reads MGRVFKKKGG. Residues 1–65 are disordered; the sequence is MGRVFKKKGG…DDEEEDEDEQ (65 aa). Positions 11–33 are enriched in basic and acidic residues; that stretch reads AKREAEEEKQEELVMRKKLRKEE. Positions 34-65 are enriched in acidic residues; it reads EPEPVEDVEEDEDVSDEDDEDIDDEEEDEDEQ.

This sequence belongs to the BCP1 family.

This Caenorhabditis elegans protein is Protein BCCIP homolog.